Consider the following 465-residue polypeptide: Cysteine--tRNA ligase (465 aa).

Cys28 is a binding site for Zn(2+). The 'HIGH' region signature appears at 30-40 (MTVYDYCHLGH). The Zn(2+) site is built by Cys209, His234, and Glu238. Positions 266–270 (KMSKS) match the 'KMSKS' region motif. ATP is bound at residue Lys269.

This sequence belongs to the class-I aminoacyl-tRNA synthetase family. Monomer. Requires Zn(2+) as cofactor.

The protein localises to the cytoplasm. The enzyme catalyses tRNA(Cys) + L-cysteine + ATP = L-cysteinyl-tRNA(Cys) + AMP + diphosphate. This chain is Cysteine--tRNA ligase, found in Methylococcus capsulatus (strain ATCC 33009 / NCIMB 11132 / Bath).